Consider the following 211-residue polypeptide: Arginine exporter protein ArgO (211 aa).

The next 6 helical transmembrane spans lie at 1 to 21 (MFTY…PLGP), 37 to 57 (LMIA…GIFG), 68 to 88 (LLAI…FGAL), 111 to 131 (IIIT…DTFV), 147 to 167 (WFAL…ALLA), and 182 to 202 (IINI…AKEG).

Belongs to the LysE/ArgO transporter (TC 2.A.75) family.

Its subcellular location is the cell inner membrane. The enzyme catalyses L-arginine(in) = L-arginine(out). Functionally, involved in the export of arginine. Important to control the intracellular level of arginine and the correct balance between arginine and lysine. This chain is Arginine exporter protein ArgO, found in Klebsiella pneumoniae (strain 342).